The chain runs to 164 residues: Type II secretion system protein M (164 aa).

Topologically, residues 1–17 are cytoplasmic; the sequence is MNELRQRWQAMSQRERQ. Residues 18-38 form a helical membrane-spanning segment; sequence LMVVCAAVLLLCVVYYAILQP. The Periplasmic portion of the chain corresponds to 39–164; that stretch reads WQEREDLWER…RLMLERTDEA (126 aa).

It belongs to the GSP M family. In terms of assembly, type II secretion system is composed of four main components: the outer membrane complex, the inner membrane complex, the cytoplasmic secretion ATPase and the periplasm-spanning pseudopilus. Forms homodimers. Interacts with OutL/GspL. Interacts with OutE/GspE and OutF/GspF.

It is found in the cell inner membrane. In terms of biological role, inner membrane component of the type II secretion system required for the energy-dependent secretion of extracellular factors such as proteases and toxins from the periplasm. Plays a role in the complex assembly and recruits OutL resulting in a stable complex in the inner membrane. Provides thus a link between the energy-providing OutE protein in the cytoplasm and the rest of the T2SS machinery. The polypeptide is Type II secretion system protein M (outM) (Pectobacterium carotovorum subsp. carotovorum (Erwinia carotovora subsp. carotovora)).